Here is a 438-residue protein sequence, read N- to C-terminus: Keratin, type I cytoskeletal 13 (438 aa).

Residues 1 to 95 form a head region; the sequence is MSCRFQSSSM…SVDGGLLSGN (95 aa). Residues Arg-27 and Arg-35 each carry the omega-N-methylarginine modification. The segment at 96 to 131 is coil; sequence EKITMQNLNDRLASYLEKVRALEAANADLEVKIRDW. The IF rod domain occupies 96–408; it reads EKITMQNLND…SLLEGQDAKM (313 aa). The linker 1 stretch occupies residues 132 to 150; sequence HLKQSPTSPERDYSAYYKT. A coil 1B region spans residues 151 to 242; sequence IEELRIKILE…KNHEEEMKEF (92 aa). A linker 12 region spans residues 243 to 265; the sequence is SNQAVGQVNVEMDATPGIDLTRV. Residues 266–404 are coil 2; that stretch reads LAEMREQYEA…ATYRSLLEGQ (139 aa). A tail region spans residues 405-438; that stretch reads DAKMTGFNTGGNSTTTSNTSTSPSTSGRPDFRKY. A disordered region spans residues 408–438; the sequence is MTGFNTGGNSTTTSNTSTSPSTSGRPDFRKY. A compositionally biased stretch (low complexity) spans 409 to 431; it reads TGFNTGGNSTTTSNTSTSPSTSG.

It belongs to the intermediate filament family. As to quaternary structure, heterotetramer of two type I and two type II keratins. Post-translationally, O-glycosylated; glycans consist of single N-acetylglucosamine residues.

Functionally, type 1 keratin. Maintains postnatal tongue mucosal cell homeostasis and tissue organization in response to mechanical stress, potentially via regulation of the G1/S phase cyclins CCNE1 and CCNE2. The polypeptide is Keratin, type I cytoskeletal 13 (Rattus norvegicus (Rat)).